The chain runs to 896 residues: Protein argonaute 9 (896 aa).

The 114-residue stretch at 267–380 (PVVDFLLANQ…FPIEFCNLVS (114 aa)) folds into the PAZ domain. Residues 550–857 (FLLCILAERK…AAAQMGTVMK (308 aa)) form the Piwi domain.

This sequence belongs to the argonaute family. Ago subfamily. As to expression, expressed in embryonic shoot apex region, pollen and developing ovules.

Functionally, involved in RNA-mediated post-transcriptional gene silencing (PTGS). Main component of the RNA-induced silencing complex (RISC) that binds to a short guide RNA such as a microRNA (miRNA) or small interfering RNA (siRNA). RISC uses the mature miRNA or siRNA as a guide for slicer-directed cleavage of homologous mRNAs to repress gene expression. Associates preferentially with small RNAs of 24 nucleotide in length with a 5' terminal adenosine. Interacts with 24 nucleotide sRNAs derived from transposable elements (TEs). Required to silence pericentrometric-located TEs in female gametes and their accessory cells. Necessary to inactivate a significant proportion of long terminal repeat retrotransposons (LTRs) in the ovule. Required to specify cell fate in ovule. Involved in the control of female gamete formation by restricting the specification of gametophyte precursors in a dosage-dependent, non-cell-autonomous manner. Targeted by turnip yellows virus (TuYV) protein P0 (via F-box-like domain) for probable proteasome degradation and thereby inactivating AGO9 function in RNA silencing. The protein is Protein argonaute 9 (AGO9) of Arabidopsis thaliana (Mouse-ear cress).